The primary structure comprises 247 residues: 3-deoxy-manno-octulosonate cytidylyltransferase (247 aa).

This sequence belongs to the KdsB family.

The protein resides in the cytoplasm. It catalyses the reaction 3-deoxy-alpha-D-manno-oct-2-ulosonate + CTP = CMP-3-deoxy-beta-D-manno-octulosonate + diphosphate. The protein operates within nucleotide-sugar biosynthesis; CMP-3-deoxy-D-manno-octulosonate biosynthesis; CMP-3-deoxy-D-manno-octulosonate from 3-deoxy-D-manno-octulosonate and CTP: step 1/1. It functions in the pathway bacterial outer membrane biogenesis; lipopolysaccharide biosynthesis. Functionally, activates KDO (a required 8-carbon sugar) for incorporation into bacterial lipopolysaccharide in Gram-negative bacteria. The sequence is that of 3-deoxy-manno-octulosonate cytidylyltransferase from Pelodictyon phaeoclathratiforme (strain DSM 5477 / BU-1).